The following is a 128-amino-acid chain: Light-regulated protein, chloroplastic (128 aa).

2 tandem repeats follow at residues 58–72 (VFPM…GEAC) and 111–125 (VFPE…GEFC). The segment at 58–125 (VFPMEACDLI…ACDDLGGEFC (68 aa)) is 2 X 15 AA approximate repeats.

Component of high molecular weight thylakoid LFNRs-containing protein complexes containing LIR1, LFNR1, LFNR2, TIC62 and TROL proteins. Interacts directly with LFNR1 and LFNR2; LIR1 increases the affinity of LFNR1 and LFNR2 for TIC62 and subsequent thylakoid relocalization. Post-translationally, may form interchain disulfide bonds with LFNR1 and LFNR2.

The protein resides in the plastid. Its subcellular location is the chloroplast thylakoid membrane. The protein localises to the chloroplast envelope. It localises to the chloroplast stroma. In terms of biological role, thylakoid-determinant subunit of high molecular weight LFNRs-containing protein complexes. In Oryza sativa subsp. japonica (Rice), this protein is Light-regulated protein, chloroplastic (LIR1).